We begin with the raw amino-acid sequence, 1952 residues long: Protein ROS1A (1952 aa).

4 disordered regions span residues 72 to 157 (EVVG…CRSE), 693 to 778 (IIRP…ESTS), 1302 to 1334 (HGTSNVQGDNTVRTEQNGGENSQSGYSQQDDNV), and 1367 to 1398 (LIENSKDDKKTSPKVPVDGSKAKRPRVGAGKK). Composition is skewed to basic residues over residues 90 to 102 (PARKPKKKKHRPK) and 130 to 139 (GKRKYVRKKT). 2 stretches are compositionally biased toward basic and acidic residues: residues 709–720 (PRTDNHQVKVSE) and 727–747 (LPEKRKVGRPRKELKPGEKPK). A compositionally biased stretch (polar residues) spans 769-778 (TNPLQNESTS). Positions 1388–1398 (AKRPRVGAGKK) are enriched in basic residues. [4Fe-4S] cluster is bound by residues Cys1582, Cys1589, Cys1592, and Cys1598.

This sequence belongs to the DNA glycosylase family. DEMETER subfamily. [4Fe-4S] cluster serves as cofactor. As to expression, expressed in roots, leaf blades, leaf sheaths, apical and lateral shoot meristems, inflorescence meristems, lodicules, pollen grains, ovules and seeds. Expressed in vascular tissues of roots and leaves, pollen grains, pericarp, aleurone, and starchy endosperm.

The protein localises to the nucleus. In terms of biological role, bifunctional DNA glycosylase/lyase, which excises 5-methylcytosine (5-meC) and 5-hydroxymethylcytosine (5-hmeC), leaving an apyrimidinic (AP) site that is subsequently incised by the lyase activity. DNA demethylase that is indispensable in both male and female gametophyte development. Involved in the regulation of DNA methylation in the promoters of RISBZ1/BZIP58 and DOF3/RPBF, two transcription factors that functions synergistically to positively regulate genes that are key players in the development of aleurone layers. Active DNA demethylation carried out by ROS1A in rice endosperms may restrict the number of aleurone cell layers. This chain is Protein ROS1A, found in Oryza sativa subsp. japonica (Rice).